Consider the following 275-residue polypeptide: uncharacterized protein (275 aa).

Residues Glu-71, Asp-85, Ile-87, and Asp-88 each coordinate Mg(2+). Glu-71 provides a ligand contact to substrate. Ile-87–Thr-90 contacts substrate. 3 consecutive transmembrane segments (helical) span residues Ile-87–Val-107, Pro-112–Gly-132, and Ile-178–Gly-198. Asp-208 contributes to the Mg(2+) binding site. Asp-208 contributes to the substrate binding site.

The protein belongs to the inositol monophosphatase superfamily.

It is found in the cell membrane. This is an uncharacterized protein from Sinorhizobium fredii (strain NBRC 101917 / NGR234).